We begin with the raw amino-acid sequence, 144 residues long: MLVPKRVKHRKVQRGKMRGEAKGGKTVTFGEFGLQALDSHWISNRQIEAARIAMTRYMKRGGKVWIKIFPHLSYTSKGVGTRMGNGKGAPEGWVAPVKRMKVMFEVAGVPEEVAREALRLAGNKLPVRTKIVKREEVGGQSNED.

Over residues 1–16 the composition is skewed to basic residues; it reads MLVPKRVKHRKVQRGK. The segment at 1-20 is disordered; that stretch reads MLVPKRVKHRKVQRGKMRGE.

It belongs to the universal ribosomal protein uL16 family. In terms of assembly, part of the 50S ribosomal subunit.

Functionally, binds 23S rRNA and is also seen to make contacts with the A and possibly P site tRNAs. This chain is Large ribosomal subunit protein uL16, found in Limosilactobacillus fermentum (strain NBRC 3956 / LMG 18251) (Lactobacillus fermentum).